The chain runs to 157 residues: Phosphopantetheine adenylyltransferase (157 aa).

Residue S8 coordinates substrate. Residues 8–9 and H16 each bind ATP; that span reads SF. K40, T72, and R86 together coordinate substrate. ATP-binding positions include 87-89, E97, and 122-128; these read GLR and YSFLSSS.

The protein belongs to the bacterial CoaD family. Homohexamer. Mg(2+) serves as cofactor.

It is found in the cytoplasm. The enzyme catalyses (R)-4'-phosphopantetheine + ATP + H(+) = 3'-dephospho-CoA + diphosphate. It functions in the pathway cofactor biosynthesis; coenzyme A biosynthesis; CoA from (R)-pantothenate: step 4/5. Reversibly transfers an adenylyl group from ATP to 4'-phosphopantetheine, yielding dephospho-CoA (dPCoA) and pyrophosphate. This chain is Phosphopantetheine adenylyltransferase, found in Crocosphaera subtropica (strain ATCC 51142 / BH68) (Cyanothece sp. (strain ATCC 51142)).